A 192-amino-acid chain; its full sequence is Der GTPase-activating protein YihI (192 aa).

The disordered stretch occupies residues methionine 1–proline 80. Composition is skewed to basic and acidic residues over residues arginine 9–glutamine 25, threonine 37–glutamate 48, and aspartate 65–proline 80.

It belongs to the YihI family. Interacts with Der.

Its function is as follows. A GTPase-activating protein (GAP) that modifies Der/EngA GTPase function. May play a role in ribosome biogenesis. This chain is Der GTPase-activating protein YihI, found in Actinobacillus pleuropneumoniae serotype 7 (strain AP76).